We begin with the raw amino-acid sequence, 336 residues long: UDP-3-O-acylglucosamine N-acyltransferase (336 aa).

Residue H233 is the Proton acceptor of the active site.

Belongs to the transferase hexapeptide repeat family. LpxD subfamily. Homotrimer.

It catalyses the reaction a UDP-3-O-[(3R)-3-hydroxyacyl]-alpha-D-glucosamine + a (3R)-hydroxyacyl-[ACP] = a UDP-2-N,3-O-bis[(3R)-3-hydroxyacyl]-alpha-D-glucosamine + holo-[ACP] + H(+). It functions in the pathway bacterial outer membrane biogenesis; LPS lipid A biosynthesis. In terms of biological role, catalyzes the N-acylation of UDP-3-O-acylglucosamine using 3-hydroxyacyl-ACP as the acyl donor. Is involved in the biosynthesis of lipid A, a phosphorylated glycolipid that anchors the lipopolysaccharide to the outer membrane of the cell. The protein is UDP-3-O-acylglucosamine N-acyltransferase of Helicobacter pylori (strain J99 / ATCC 700824) (Campylobacter pylori J99).